The primary structure comprises 807 residues: Glycerol-3-phosphate acyltransferase (807 aa).

An HXXXXD motif motif is present at residues 308–313; it reads CHRSHM.

Belongs to the GPAT/DAPAT family.

It is found in the cell inner membrane. It catalyses the reaction sn-glycerol 3-phosphate + an acyl-CoA = a 1-acyl-sn-glycero-3-phosphate + CoA. It functions in the pathway phospholipid metabolism; CDP-diacylglycerol biosynthesis; CDP-diacylglycerol from sn-glycerol 3-phosphate: step 1/3. The chain is Glycerol-3-phosphate acyltransferase from Shewanella loihica (strain ATCC BAA-1088 / PV-4).